A 291-amino-acid polypeptide reads, in one-letter code: 33 kDa chaperonin (291 aa).

Intrachain disulfides connect Cys-229–Cys-231 and Cys-262–Cys-265.

The protein belongs to the HSP33 family. Post-translationally, under oxidizing conditions two disulfide bonds are formed involving the reactive cysteines. Under reducing conditions zinc is bound to the reactive cysteines and the protein is inactive.

The protein localises to the cytoplasm. Its function is as follows. Redox regulated molecular chaperone. Protects both thermally unfolding and oxidatively damaged proteins from irreversible aggregation. Plays an important role in the bacterial defense system toward oxidative stress. The polypeptide is 33 kDa chaperonin (Vibrio parahaemolyticus serotype O3:K6 (strain RIMD 2210633)).